The chain runs to 471 residues: Chitobiosyldiphosphodolichol beta-mannosyltransferase (471 aa).

Residues Met1–Ser31 are Lumenal-facing. Residues Trp32 to Pro52 traverse the membrane as a helical segment. Over Tyr53–Lys126 the chain is Cytoplasmic. Positions Ser127–Trp147 form an intramembrane region, helical. The Cytoplasmic portion of the chain corresponds to Glu148–Ser471.

The protein belongs to the glycosyltransferase group 1 family.

The protein resides in the endoplasmic reticulum membrane. It carries out the reaction an N,N'-diacetylchitobiosyl-diphospho-di-trans,poly-cis-dolichol + GDP-alpha-D-mannose = a beta-D-Man-(1-&gt;4)-beta-D-GlcNAc-(1-&gt;4)-alpha-D-GlcNAc-diphospho-di-trans,poly-cis-dolichol + GDP + H(+). The protein operates within protein modification; protein glycosylation. Participates in the formation of the lipid-linked precursor oligosaccharide for N-glycosylation. Involved in assembling the dolichol-pyrophosphate-GlcNAc(2)-Man(5) intermediate on the cytoplasmic surface of the ER. The chain is Chitobiosyldiphosphodolichol beta-mannosyltransferase (ALG1) from Eremothecium gossypii (strain ATCC 10895 / CBS 109.51 / FGSC 9923 / NRRL Y-1056) (Yeast).